The chain runs to 363 residues: Ribonuclease P protein subunit p40 (363 aa).

In terms of assembly, component of nuclear RNase P and RNase MRP ribonucleoproteins. RNase P consists of a catalytic RNA moiety and about 10 protein subunits; POP1, POP4, POP5, POP7, RPP14, RPP21, RPP25, RPP30, RPP38 and RPP40. Within the RNase P complex, POP1, POP7 and RPP25 form the 'finger' subcomplex, POP5, RPP14, RPP40 and homodimeric RPP30 form the 'palm' subcomplex, and RPP21, POP4 and RPP38 form the 'wrist' subcomplex. All subunits of the RNase P complex interact with the catalytic RNA. Several subunits of RNase P are also part of the RNase MRP complex. RNase MRP consists of a catalytic RNA moiety and about 8 protein subunits; POP1, POP7, RPP25, RPP30, RPP38, RPP40 and possibly also POP4 and POP5.

The protein resides in the nucleus. It is found in the nucleolus. Its function is as follows. Component of ribonuclease P, a ribonucleoprotein complex that generates mature tRNA molecules by cleaving their 5'-ends. Also a component of the MRP ribonuclease complex, which cleaves pre-rRNA sequences. This Homo sapiens (Human) protein is Ribonuclease P protein subunit p40 (RPP40).